A 203-amino-acid polypeptide reads, in one-letter code: dITP/XTP pyrophosphatase (203 aa).

15 to 20 contributes to the substrate binding site; that stretch reads SGNAGK. Positions 45 and 74 each coordinate Mg(2+). Asp74 serves as the catalytic Proton acceptor. Substrate-binding positions include Ser75, 153–156, Lys176, and 181–182; these read FGYD and HR.

This sequence belongs to the HAM1 NTPase family. In terms of assembly, homodimer. The cofactor is Mg(2+).

The catalysed reaction is XTP + H2O = XMP + diphosphate + H(+). It catalyses the reaction dITP + H2O = dIMP + diphosphate + H(+). It carries out the reaction ITP + H2O = IMP + diphosphate + H(+). Functionally, pyrophosphatase that catalyzes the hydrolysis of nucleoside triphosphates to their monophosphate derivatives, with a high preference for the non-canonical purine nucleotides XTP (xanthosine triphosphate), dITP (deoxyinosine triphosphate) and ITP. Seems to function as a house-cleaning enzyme that removes non-canonical purine nucleotides from the nucleotide pool, thus preventing their incorporation into DNA/RNA and avoiding chromosomal lesions. The polypeptide is dITP/XTP pyrophosphatase (Prochlorococcus marinus (strain MIT 9313)).